A 109-amino-acid polypeptide reads, in one-letter code: SRA stem-loop-interacting RNA-binding protein, mitochondrial (109 aa).

Serine 15 bears the Phosphoserine mark. The RRM domain maps to 19-103 (PVAFVRRIPW…RRPKLPQTSD (85 aa)). Threonine 101 bears the Phosphothreonine mark. Residue serine 102 is modified to Phosphoserine.

In terms of tissue distribution, ubiquitously expressed, with highest level in heart, liver, skeletal muscle and testis.

It is found in the mitochondrion. The protein resides in the nucleus. In terms of biological role, RNA-binding protein that acts as a nuclear receptor corepressor. Probably acts by binding the SRA RNA, and repressing the SRA-mediated nuclear receptor coactivation. Binds the STR7 loop of SRA RNA. Also able to repress glucocorticoid (GR), androgen (AR), thyroid (TR) and VDR-mediated transactivation. The protein is SRA stem-loop-interacting RNA-binding protein, mitochondrial (SLIRP) of Homo sapiens (Human).